A 537-amino-acid chain; its full sequence is Phenylalanine--tRNA ligase beta subunit (537 aa).

Residues 268–343 enclose the B5 domain; it reads FNFRPYRLNL…KSYGIENVRE (76 aa). 4 residues coordinate Mg(2+): Asp321, Asp327, Glu330, and Asp331.

The protein belongs to the phenylalanyl-tRNA synthetase beta subunit family. Type 2 subfamily. In terms of assembly, tetramer of two alpha and two beta subunits. Mg(2+) is required as a cofactor.

It localises to the cytoplasm. The enzyme catalyses tRNA(Phe) + L-phenylalanine + ATP = L-phenylalanyl-tRNA(Phe) + AMP + diphosphate + H(+). In Thermoplasma volcanium (strain ATCC 51530 / DSM 4299 / JCM 9571 / NBRC 15438 / GSS1), this protein is Phenylalanine--tRNA ligase beta subunit.